Here is a 179-residue protein sequence, read N- to C-terminus: ATP synthase subunit delta (179 aa).

The protein belongs to the ATPase delta chain family. F-type ATPases have 2 components, F(1) - the catalytic core - and F(0) - the membrane proton channel. F(1) has five subunits: alpha(3), beta(3), gamma(1), delta(1), epsilon(1). F(0) has three main subunits: a(1), b(2) and c(10-14). The alpha and beta chains form an alternating ring which encloses part of the gamma chain. F(1) is attached to F(0) by a central stalk formed by the gamma and epsilon chains, while a peripheral stalk is formed by the delta and b chains.

It localises to the cell inner membrane. In terms of biological role, f(1)F(0) ATP synthase produces ATP from ADP in the presence of a proton or sodium gradient. F-type ATPases consist of two structural domains, F(1) containing the extramembraneous catalytic core and F(0) containing the membrane proton channel, linked together by a central stalk and a peripheral stalk. During catalysis, ATP synthesis in the catalytic domain of F(1) is coupled via a rotary mechanism of the central stalk subunits to proton translocation. Functionally, this protein is part of the stalk that links CF(0) to CF(1). It either transmits conformational changes from CF(0) to CF(1) or is implicated in proton conduction. In Anaeromyxobacter sp. (strain K), this protein is ATP synthase subunit delta.